The chain runs to 537 residues: [Pyruvate dehydrogenase [acetyl-transferring]]-phosphatase 1, mitochondrial (537 aa).

The transit peptide at 1–71 directs the protein to the mitochondrion; that stretch reads MPAPTQLFFP…WWQYTQGRRY (71 aa). One can recognise a PPM-type phosphatase domain in the interval 109-525; sequence ILGFDSNQLP…DDITIIVVQF (417 aa). Positions 144 and 145 each coordinate Mn(2+). Residue K202 is modified to N6-acetyllysine. The Mn(2+) site is built by D418 and D516.

This sequence belongs to the PP2C family. Heterodimer of a catalytic (PDP1) and a regulatory (PDPR) subunit. Mn(2+) is required as a cofactor. Mg(2+) serves as cofactor.

The protein localises to the mitochondrion. It carries out the reaction O-phospho-L-seryl-[pyruvate dehydrogenase E1 alpha subunit] + H2O = L-seryl-[pyruvate dehydrogenase E1 alpha subunit] + phosphate. Its activity is regulated as follows. Magnesium-dependent and calcium-stimulated. PDP1 activity strongly depends on its Ca(2+)-dependent binding to the lipoyl domain of E2 subunit of component of the pyruvate dehydrogenase complex. Functionally, mitochondrial enzyme that catalyzes the dephosphorylation and concomitant reactivation of the alpha subunit of the E1 component of the pyruvate dehydrogenase complex (PDC), thereby stimulating the conversion of pyruvate into acetyl-CoA. The polypeptide is [Pyruvate dehydrogenase [acetyl-transferring]]-phosphatase 1, mitochondrial (Homo sapiens (Human)).